A 173-amino-acid polypeptide reads, in one-letter code: Photosystem I assembly protein Ycf3 (173 aa).

TPR repeat units lie at residues 35–68, 72–105, and 120–153; these read AFVYYRDGMSAQAEGEYAEALEYYEEALTLEEDT, GYILYNMGLIYASNGDHDKALELYHQAIELNPRL, and GEKAKETGDHDGGEALFDQAADYWIRAIRMAPNN.

The protein belongs to the Ycf3 family.

It localises to the cellular thylakoid membrane. Essential for the assembly of the photosystem I (PSI) complex. May act as a chaperone-like factor to guide the assembly of the PSI subunits. In Nostoc sp. (strain PCC 7120 / SAG 25.82 / UTEX 2576), this protein is Photosystem I assembly protein Ycf3.